The primary structure comprises 490 residues: Glucose-6-phosphate 1-dehydrogenase (490 aa).

Residues Arg49, 91 to 92 (DV), and Lys146 contribute to the NADP(+) site. 4 residues coordinate substrate: His176, Lys180, Glu214, and Asp233. The active-site Proton acceptor is His238. Lys338 and Lys343 together coordinate substrate.

It belongs to the glucose-6-phosphate dehydrogenase family.

The enzyme catalyses D-glucose 6-phosphate + NADP(+) = 6-phospho-D-glucono-1,5-lactone + NADPH + H(+). The protein operates within carbohydrate degradation; pentose phosphate pathway; D-ribulose 5-phosphate from D-glucose 6-phosphate (oxidative stage): step 1/3. Its function is as follows. Catalyzes the oxidation of glucose 6-phosphate to 6-phosphogluconolactone. This Buchnera aphidicola subsp. Schizaphis graminum (strain Sg) protein is Glucose-6-phosphate 1-dehydrogenase.